The following is a 200-amino-acid chain: MPINLYSKAVFLKSAARVNQLPEDSGYEVAFAGRSNAGKSSALNCLTNNKNLARTSKTPGRTQLINLFSLDEQRRLVDLPGYGYAKVAMEVKLEWQKNLAHYLEARQCLRGLILLMDVRHPLKDLDQILVNWALHRELPVHILLTKADKLSRSEVKNAVLKVRQYYELAEHLVSVQAFSSVKKDGVEELISLLDRWYEWN.

The region spanning 25 to 199 is the EngB-type G domain; sequence SGYEVAFAGR…ISLLDRWYEW (175 aa). GTP contacts are provided by residues 33-40, 60-64, 78-81, 145-148, and 178-180; these read GRSNAGKS, GRTQL, DLPG, TKAD, and FSS. Positions 40 and 62 each coordinate Mg(2+).

The protein belongs to the TRAFAC class TrmE-Era-EngA-EngB-Septin-like GTPase superfamily. EngB GTPase family. Mg(2+) serves as cofactor.

In terms of biological role, necessary for normal cell division and for the maintenance of normal septation. The chain is Probable GTP-binding protein EngB from Legionella pneumophila (strain Corby).